Reading from the N-terminus, the 417-residue chain is uncharacterized protein (417 aa).

This sequence belongs to the MG032/MG096/MG288 family.

This is an uncharacterized protein from Mycoplasma pneumoniae (strain ATCC 29342 / M129 / Subtype 1) (Mycoplasmoides pneumoniae).